Here is a 65-residue protein sequence, read N- to C-terminus: Small ribosomal subunit protein eS31 (65 aa).

Residues C36, C39, C55, and C58 each coordinate Zn(2+). The C4-type zinc-finger motif lies at 36-58; it reads CPKCGSVMAFHKEPVPRWHCGKC.

The protein belongs to the eukaryotic ribosomal protein eS31 family. Part of the 30S ribosomal subunit. Zn(2+) serves as cofactor.

The polypeptide is Small ribosomal subunit protein eS31 (Pyrobaculum aerophilum (strain ATCC 51768 / DSM 7523 / JCM 9630 / CIP 104966 / NBRC 100827 / IM2)).